The primary structure comprises 205 residues: Protein N-terminal glutamine amidohydrolase (205 aa).

Residues cysteine 20, histidine 74, and aspartate 90 contribute to the active site.

The protein belongs to the NTAQ1 family. In terms of assembly, monomer.

It carries out the reaction N-terminal L-glutaminyl-[protein] + H2O = N-terminal L-glutamyl-[protein] + NH4(+). Functionally, mediates the side-chain deamidation of N-terminal glutamine residues to glutamate, an important step in N-end rule pathway of protein degradation. Conversion of the resulting N-terminal glutamine to glutamate renders the protein susceptible to arginylation, polyubiquitination and degradation as specified by the N-end rule. Does not act on substrates with internal or C-terminal glutamine and does not act on non-glutamine residues in any position. The chain is Protein N-terminal glutamine amidohydrolase (tun) from Drosophila grimshawi (Hawaiian fruit fly).